Consider the following 395-residue polypeptide: Cytochrome b561 and DOMON domain-containing protein At5g47530 (395 aa).

Residues 1-24 (MAISSNLLLCLSLFIFIITKSALA) form the signal peptide. Positions 47–162 (LDSFLHYTYD…GIINTVWQDG (116 aa)) constitute a DOMON domain. Positions 176–371 (GNNVRSVSTL…LEGFTWYVVI (196 aa)) constitute a Cytochrome b561 domain. The next 2 membrane-spanning stretches (helical) occupy residues 210-230 (IHGI…AIIA) and 242-262 (AWFY…VAGW). The heme b site is built by His211, His247, and His280. A helical membrane pass occupies residues 282 to 302 (AVGIALFCLATIQVFAMFLRP). His316 contacts heme b. The next 2 membrane-spanning stretches (helical) occupy residues 318 to 338 (TVGY…LDIL) and 351 to 371 (IIVV…YVVI).

Heme b serves as cofactor.

Its subcellular location is the membrane. May act as a catecholamine-responsive trans-membrane electron transporter. In Arabidopsis thaliana (Mouse-ear cress), this protein is Cytochrome b561 and DOMON domain-containing protein At5g47530.